Consider the following 224-residue polypeptide: Enolase-phosphatase E1 (224 aa).

This sequence belongs to the HAD-like hydrolase superfamily. MasA/MtnC family. As to quaternary structure, monomer. Mg(2+) serves as cofactor.

The enzyme catalyses 5-methylsulfanyl-2,3-dioxopentyl phosphate + H2O = 1,2-dihydroxy-5-(methylsulfanyl)pent-1-en-3-one + phosphate. It functions in the pathway amino-acid biosynthesis; L-methionine biosynthesis via salvage pathway; L-methionine from S-methyl-5-thio-alpha-D-ribose 1-phosphate: step 3/6. Its pathway is amino-acid biosynthesis; L-methionine biosynthesis via salvage pathway; L-methionine from S-methyl-5-thio-alpha-D-ribose 1-phosphate: step 4/6. Functionally, bifunctional enzyme that catalyzes the enolization of 2,3-diketo-5-methylthiopentyl-1-phosphate (DK-MTP-1-P) into the intermediate 2-hydroxy-3-keto-5-methylthiopentenyl-1-phosphate (HK-MTPenyl-1-P), which is then dephosphorylated to form the acireductone 1,2-dihydroxy-3-keto-5-methylthiopentene (DHK-MTPene). In Thioalkalivibrio sulfidiphilus (strain HL-EbGR7), this protein is Enolase-phosphatase E1.